The chain runs to 192 residues: Recombination protein RecR (192 aa).

The segment at Cys51–Cys66 adopts a C4-type zinc-finger fold. Positions Gly74–Pro168 constitute a Toprim domain.

It belongs to the RecR family.

In terms of biological role, may play a role in DNA repair. It seems to be involved in an RecBC-independent recombinational process of DNA repair. It may act with RecF and RecO. The protein is Recombination protein RecR of Parasynechococcus marenigrum (strain WH8102).